The chain runs to 125 residues: Oxytocin-neurophysin 1 (125 aa).

An N-terminal signal peptide occupies residues 1–19 (MAGSSLACCLLGLLALTSA). An intrachain disulfide couples Cys-20 to Cys-25. Glycine amide is present on Gly-28. Cystine bridges form between Cys-41–Cys-85, Cys-44–Cys-58, Cys-52–Cys-75, Cys-59–Cys-65, Cys-92–Cys-104, Cys-98–Cys-116, and Cys-105–Cys-110.

The protein belongs to the vasopressin/oxytocin family. Interacts with oxytocin receptor (Ki=1.5 nM). Interacts with vasopressin V1aR/AVPR1A (Ki=37 nM), V1bR/AVPR1B (Ki=222 nM), and V2R/AVPR2 receptors (Ki=823 nM).

Functionally, neurophysin 1 specifically binds oxytocin. Its function is as follows. Oxytocin causes contraction of the smooth muscle of the uterus and of the mammary gland. Acts by binding to oxytocin receptor (OXTR). This is Oxytocin-neurophysin 1 (OXT) from Ovis aries (Sheep).